We begin with the raw amino-acid sequence, 228 residues long: Ribonuclease 3 (228 aa).

Residues 7–132 (LSAFMDRLGH…VIAAVYLDAG (126 aa)) form the RNase III domain. Glu45 contacts Mg(2+). Asp49 is a catalytic residue. Mg(2+)-binding residues include Asp118 and Glu121. The active site involves Glu121. A DRBM domain is found at 157 to 226 (DPKTALQEWA…AKALLERLER (70 aa)).

This sequence belongs to the ribonuclease III family. In terms of assembly, homodimer. The cofactor is Mg(2+).

Its subcellular location is the cytoplasm. It carries out the reaction Endonucleolytic cleavage to 5'-phosphomonoester.. Digests double-stranded RNA. Involved in the processing of ribosomal RNA precursors and of some mRNAs. Complements an E.coli disruption mutant, but the E.coli enzyme does not cleave R.capsulatus rRNA precursor, showing substrate recognition is different. Probably also processes some mRNAs, and tRNAs when they are encoded in the rRNA operon. Probably processes pre-crRNA and tracrRNA of type II CRISPR loci if present in the organism. The sequence is that of Ribonuclease 3 (rnc) from Rhodobacter capsulatus (Rhodopseudomonas capsulata).